The sequence spans 528 residues: Abrin-d (528 aa).

Pyrrolidone carboxylic acid is present on glutamine 1. Glutamate 164 is a catalytic residue. Asparagine 200 carries an N-linked (GlcNAc...) asparagine glycan. Cystine bridges form between cysteine 247–cysteine 269, cysteine 286–cysteine 305, and cysteine 329–cysteine 346. A Ricin B-type lectin 1 domain is found at 273–400; the sequence is YEPTVRIGGR…YLMRQGWRTG (128 aa). The 1-alpha repeat unit spans residues 283–325; it reads DGMCVDVYDDGYHNGNRIIAWKCKDRLEENQLWTLKSDLTIRS. Residues 326–366 form a 1-beta repeat; it reads NGKCLTTEGYAPGNYVMIYDCTSAVAEATYWEIWDNGTIIN. 2 N-linked (GlcNAc...) asparagine glycosylation sites follow: asparagine 361 and asparagine 401. The stretch at 369–401 is one 1-gamma repeat; sequence SALVLSAESSSMGGTLTVQTNEYLMRQGWRTGN. The Ricin B-type lectin 2 domain maps to 403-527; the sequence is TSPFVTSISG…GKPNQIWLTL (125 aa). One copy of the 2-alpha repeat lies at 414-449; sequence SDLCMQAQGSNVWLADCDNNKKEQQWALYTDGSIRS. 2 cysteine pairs are disulfide-bonded: cysteine 417–cysteine 430 and cysteine 456–cysteine 473. One copy of the 2-beta repeat lies at 453 to 492; it reads TNNCLTSKDHKQGSPIVLMACSNGWASQRWLFKNDGSIYS. Residues 495-528 form a 2-gamma repeat; that stretch reads DDMVMDVKGSDPSLKQIILWPYTGKPNQIWLTLF.

The protein in the N-terminal section; belongs to the ribosome-inactivating protein family. Type 2 RIP subfamily. As to quaternary structure, disulfide-linked dimer of A and B chains.

It carries out the reaction Endohydrolysis of the N-glycosidic bond at one specific adenosine on the 28S rRNA.. Its function is as follows. The A chain is responsible for inhibiting protein synthesis through the catalytic inactivation of 60S ribosomal subunits by removing adenine from position 4,324 of 28S rRNA. Functionally, the B chain is a galactose-specific lectin that facilitates the binding of abrin to the cell membrane that precedes endocytosis. This is Abrin-d from Abrus precatorius (Indian licorice).